The following is a 208-amino-acid chain: MSEGKVRVKVCGTTTLPDALHAAAAGADALGFIFAPGSKRRVTASQARGISLNVGPSVARIGVFMGQSLDEVLRTAEAARVSAVQLHGPLPGVYVAAVAGYYPVLRVLGPEELQAGNVQAATVQATPGVTLMLDAPQPGSGQPLDWAALVPHFPPGSWLAGGLGPDNVAQAIATLRPAGVDAVSRLEASPGLKNPQAVEAFIDAVKRS.

It belongs to the TrpF family.

It carries out the reaction N-(5-phospho-beta-D-ribosyl)anthranilate = 1-(2-carboxyphenylamino)-1-deoxy-D-ribulose 5-phosphate. It functions in the pathway amino-acid biosynthesis; L-tryptophan biosynthesis; L-tryptophan from chorismate: step 3/5. The protein is N-(5'-phosphoribosyl)anthranilate isomerase of Deinococcus radiodurans (strain ATCC 13939 / DSM 20539 / JCM 16871 / CCUG 27074 / LMG 4051 / NBRC 15346 / NCIMB 9279 / VKM B-1422 / R1).